A 509-amino-acid polypeptide reads, in one-letter code: Photosystem II CP47 reaction center protein (509 aa).

Transmembrane regions (helical) follow at residues 21–36, 101–115, 140–156, 203–218, 237–252, and 457–472; these read AVHL…WAGS, IVLS…IWHW, GIHL…FGAF, IAAG…FHLT, VLSS…AFIT, and NFAL…HGSR.

The protein belongs to the PsbB/PsbC family. PsbB subfamily. As to quaternary structure, PSII is composed of 1 copy each of membrane proteins PsbA, PsbB, PsbC, PsbD, PsbE, PsbF, PsbH, PsbI, PsbJ, PsbK, PsbL, PsbM, PsbT, PsbX, PsbY, PsbZ, Psb30/Ycf12, at least 3 peripheral proteins of the oxygen-evolving complex and a large number of cofactors. It forms dimeric complexes. It depends on Binds multiple chlorophylls. PSII binds additional chlorophylls, carotenoids and specific lipids. as a cofactor.

It is found in the plastid. Its subcellular location is the chloroplast thylakoid membrane. One of the components of the core complex of photosystem II (PSII). It binds chlorophyll and helps catalyze the primary light-induced photochemical processes of PSII. PSII is a light-driven water:plastoquinone oxidoreductase, using light energy to abstract electrons from H(2)O, generating O(2) and a proton gradient subsequently used for ATP formation. The protein is Photosystem II CP47 reaction center protein of Porphyra purpurea (Red seaweed).